We begin with the raw amino-acid sequence, 339 residues long: Serpentine receptor class alpha-24 (339 aa).

Helical transmembrane passes span 26 to 46 (ITVKMSSVLVVTVILLSYYFA), 65 to 82 (LILLVCLLNSIIHQTTML), 112 to 132 (ELFVYYLTTYFSTYSVFSLAF), 151 to 171 (VSIFLLFIQLIFTLGTYYVGL), 199 to 219 (FRTLIMGICIIVTVFVYYLSV), 248 to 268 (VCILIVLQFACILISSLGVNY), and 284 to 304 (LAPFFVGVTYANLCLPLVIHC).

The protein belongs to the nematode receptor-like protein sra family.

Its subcellular location is the membrane. This Caenorhabditis elegans protein is Serpentine receptor class alpha-24 (sra-24).